Here is a 382-residue protein sequence, read N- to C-terminus: Elongation factor Tu (382 aa).

GTP contacts are provided by residues 1–7 (HVDHGKT), 62–66 (DCPGH), and 117–120 (NKVD). Positions 1–190 (HVDHGKTTLT…AVDEYIPTPQ (190 aa)) constitute a tr-type G domain. Residue threonine 7 coordinates Mg(2+).

The protein belongs to the TRAFAC class translation factor GTPase superfamily. Classic translation factor GTPase family. EF-Tu/EF-1A subfamily. Monomer.

Its subcellular location is the cytoplasm. The enzyme catalyses GTP + H2O = GDP + phosphate + H(+). In terms of biological role, GTP hydrolase that promotes the GTP-dependent binding of aminoacyl-tRNA to the A-site of ribosomes during protein biosynthesis. This is Elongation factor Tu from Chloroflexus aurantiacus.